We begin with the raw amino-acid sequence, 190 residues long: MLDREGYRPNVGIILVNGKNEVFWGKRIREHAWQFPQGGIKYGESPVQAMYRELHEEVGLKPEHVRILGRTRDWLRYNVPDHFVRREWRGHYKGQKQIWFLLRLVGRDSDVCLRATQHPEFDAWRWSQYWVPLDAVIEFKRDVYTQALNELAVILFRRHHETRYLRQRVHGPRSTDSPSSETDGHAHIAG.

Positions 6 to 149 constitute a Nudix hydrolase domain; sequence GYRPNVGIIL…KRDVYTQALN (144 aa). A Nudix box motif is present at residues 38–59; sequence GGIKYGESPVQAMYRELHEEVG. Residues 167–190 are disordered; that stretch reads QRVHGPRSTDSPSSETDGHAHIAG.

The protein belongs to the Nudix hydrolase family. RppH subfamily. A divalent metal cation is required as a cofactor.

In terms of biological role, accelerates the degradation of transcripts by removing pyrophosphate from the 5'-end of triphosphorylated RNA, leading to a more labile monophosphorylated state that can stimulate subsequent ribonuclease cleavage. The chain is RNA pyrophosphohydrolase from Bordetella pertussis (strain Tohama I / ATCC BAA-589 / NCTC 13251).